Here is a 617-residue protein sequence, read N- to C-terminus: Electron transfer flavoprotein-ubiquinone oxidoreductase, mitochondrial (617 aa).

The transit peptide at 1–33 (MLVPLAKLSCLAYQCFHALKIKKNYLPLCATRW) directs the protein to the mitochondrion. Position 71–85 (71–85 (VVIVGAGPAGLSAAV)) interacts with FAD. Lys96 carries the N6-acetyllysine modification. Residues 109–130 (IGAHTLSGACLDPGAFKELFPD) lie within the membrane without spanning it. N6-acetyllysine occurs at positions 132 and 223. Residues Gly305 and Gly306 each contribute to the a ubiquinone site. The residue at position 357 (Lys357) is an N6-acetyllysine. An intramembrane segment occupies 428-447 (IGLHVTEYEDNLKNSWVWKE). Residue Ser551 is modified to Phosphoserine. [4Fe-4S] cluster-binding residues include Cys561, Cys586, Cys589, and Cys592. Positions 577 to 606 (FRLQINAQNCVHCKTCDIKDPSQNINWVVP) constitute a 4Fe-4S ferredoxin-type domain.

Belongs to the ETF-QO/FixC family. Monomer. [4Fe-4S] cluster is required as a cofactor. The cofactor is FAD.

The protein resides in the mitochondrion inner membrane. It carries out the reaction a ubiquinone + reduced [electron-transfer flavoprotein] = a ubiquinol + oxidized [electron-transfer flavoprotein] + H(+). Accepts electrons from ETF and reduces ubiquinone. This chain is Electron transfer flavoprotein-ubiquinone oxidoreductase, mitochondrial, found in Homo sapiens (Human).